The following is a 426-amino-acid chain: Glutamate-1-semialdehyde 2,1-aminomutase (426 aa).

The residue at position 265 (lysine 265) is an N6-(pyridoxal phosphate)lysine.

This sequence belongs to the class-III pyridoxal-phosphate-dependent aminotransferase family. HemL subfamily. Homodimer. Pyridoxal 5'-phosphate is required as a cofactor.

It is found in the cytoplasm. It carries out the reaction (S)-4-amino-5-oxopentanoate = 5-aminolevulinate. It participates in porphyrin-containing compound metabolism; protoporphyrin-IX biosynthesis; 5-aminolevulinate from L-glutamyl-tRNA(Glu): step 2/2. This is Glutamate-1-semialdehyde 2,1-aminomutase from Yersinia enterocolitica serotype O:8 / biotype 1B (strain NCTC 13174 / 8081).